A 125-amino-acid chain; its full sequence is Large ribosomal subunit protein uL22c (125 aa).

It belongs to the universal ribosomal protein uL22 family. As to quaternary structure, part of the 50S ribosomal subunit.

The protein resides in the plastid. The protein localises to the chloroplast. In terms of biological role, this protein binds specifically to 23S rRNA. Functionally, the globular domain of the protein is located near the polypeptide exit tunnel on the outside of the subunit, while an extended beta-hairpin is found that lines the wall of the exit tunnel in the center of the 70S ribosome. This Huperzia lucidula (Shining clubmoss) protein is Large ribosomal subunit protein uL22c (rpl22).